A 401-amino-acid polypeptide reads, in one-letter code: Protein IQ-DOMAIN 24 (401 aa).

The segment at 1 to 48 (MGFFGRLFGSKKQEKATPNRRRWSFATRSSHPENDSSSHSSKRRGDED) is disordered. Residues 105 to 121 (EYKAAMKIQSAFRGYLA) form a calmodulin-binding region. IQ domains are found at residues 105–133 (EYKA…ALVK) and 134–156 (LQAL…RMQT). 2 stretches are compositionally biased toward low complexity: residues 165-176 (RASRSSHVSDSS) and 278-287 (RSRTGSSSGG). 2 disordered regions span residues 165–186 (RASR…IPSS) and 258–296 (SPRK…PFTP).

The protein belongs to the IQD family. Binds to multiple calmodulin (CaM) in the presence of Ca(2+) and CaM-like proteins.

It localises to the nucleus. The protein resides in the nuclear body. It is found in the cell membrane. Its function is as follows. May be involved in cooperative interactions with calmodulins or calmodulin-like proteins. Recruits calmodulin proteins to microtubules, thus being a potential scaffold in cellular signaling and trafficking. May associate with nucleic acids and regulate gene expression at the transcriptional or post-transcriptional level. The sequence is that of Protein IQ-DOMAIN 24 from Arabidopsis thaliana (Mouse-ear cress).